We begin with the raw amino-acid sequence, 763 residues long: Phosphoglycerol transferase I (763 aa).

Transmembrane regions (helical) follow at residues 1–21 (MSELLSVALFLASVLIYAWKA), 26–46 (WWFAATLTVLGLFVILNITLY), 77–97 (ILPGIGIALALVAVFGALGWV), and 108–128 (VGYSLLALLLALGSVDASPAF).

The protein belongs to the OpgB family.

The protein resides in the cell inner membrane. The enzyme catalyses a phosphatidylglycerol + a membrane-derived-oligosaccharide D-glucose = a 1,2-diacyl-sn-glycerol + a membrane-derived-oligosaccharide 6-(glycerophospho)-D-glucose.. The protein operates within glycan metabolism; osmoregulated periplasmic glucan (OPG) biosynthesis. Its function is as follows. Transfers a phosphoglycerol residue from phosphatidylglycerol to the membrane-bound nascent glucan backbones. This chain is Phosphoglycerol transferase I, found in Salmonella dublin (strain CT_02021853).